The following is a 570-amino-acid chain: MKESPLITLVKRHSETHFANIKYGYYVLIISLVYLIGLALLRAFGRRTPSRSSSAFKNKIIYRLYDIDPAIHLGILFFAVLIPFYYHYSLTTQSTVYLKRLGRLSYALIPLNLFLTLRPNWFLRKNCTYTDFIPFHKWFSRIITVIGLLHGIFFIIKWAIDDNVSLKQKLILKTFNFVGFIISILVLFLLICSIGPMRRYNYRLFYIVHNLVNVAFILLTPIHSRPGVKFPFLLLNCTLLFIHIINRIVFAKSLMILNKNANYSKTNLVHVRLPRAILPDYFEPGSHIRISPYRRINPLYWLLPSHPYTIASLAEDNSIDLIIKETSTAEPGSQIESLRSNPKSFHLDQEKTYTLINSYPPSVPEECYSQGTNIAIICGGSGISFALPLFRHFFNKENVKYLKMIWLIKNYSEYELVLDYLKTNGLTFEKKPSNNKRISVFISGEYTAETRLDEITTNIDDENSEYEMGSFNNEDEDLSISNFNSENADSNDKTPETSHSPTKENGSLIEVKSKHSFTLSNELKSFNNESAQVNQNETWLFSCGPPSLLQLSKKYCNDERINFVCETYGL.

7 helical membrane passes run 21-41, 70-90, 101-118, 142-162, 177-197, 204-224, and 230-250; these read IKYG…LALL, AIHL…HYSL, LGRL…LTLR, IITV…AIDD, FVGF…IGPM, LFYI…PIHS, and FPFL…RIVF. Residues 101–219 enclose the Ferric oxidoreductase domain; the sequence is LGRLSYALIP…NLVNVAFILL (119 aa). In terms of domain architecture, FAD-binding FR-type spans 250–388; that stretch reads FAKSLMILNK…GGSGISFALP (139 aa). A disordered region spans residues 480 to 507; it reads ISNFNSENADSNDKTPETSHSPTKENGS.

This sequence belongs to the ferric reductase (FRE) family. AIM14 subfamily. In terms of assembly, interacts with ribosomes.

The protein resides in the membrane. Probable cell surface metalloreductase. May be involved in iron or copper homeostasis. This is Probable metalloreductase AIM14 (AIM14) from Saccharomyces cerevisiae (strain JAY291) (Baker's yeast).